Reading from the N-terminus, the 170-residue chain is Small ribosomal subunit protein uS5 (170 aa).

One can recognise an S5 DRBM domain in the interval 11 to 74; sequence ILEKLVHINR…ETARRVLIHV (64 aa).

The protein belongs to the universal ribosomal protein uS5 family. In terms of assembly, part of the 30S ribosomal subunit. Contacts proteins S4 and S8.

In terms of biological role, with S4 and S12 plays an important role in translational accuracy. Its function is as follows. Located at the back of the 30S subunit body where it stabilizes the conformation of the head with respect to the body. This Pelagibacter ubique (strain HTCC1062) protein is Small ribosomal subunit protein uS5.